Here is a 293-residue protein sequence, read N- to C-terminus: Acetylglutamate kinase (293 aa).

Substrate is bound by residues 66–67 (GG), Arg88, and Asn190.

The protein belongs to the acetylglutamate kinase family. ArgB subfamily.

The protein localises to the cytoplasm. It carries out the reaction N-acetyl-L-glutamate + ATP = N-acetyl-L-glutamyl 5-phosphate + ADP. It functions in the pathway amino-acid biosynthesis; L-arginine biosynthesis; N(2)-acetyl-L-ornithine from L-glutamate: step 2/4. Its function is as follows. Catalyzes the ATP-dependent phosphorylation of N-acetyl-L-glutamate. The sequence is that of Acetylglutamate kinase from Thiobacillus denitrificans (strain ATCC 25259 / T1).